The sequence spans 429 residues: Adenylosuccinate synthetase (429 aa).

GTP-binding positions include 12 to 18 (GDEGKGK) and 40 to 42 (GHT). The active-site Proton acceptor is the aspartate 13. Mg(2+)-binding residues include aspartate 13 and glycine 40. Residues 13–16 (DEGK), 38–41 (NAGH), threonine 129, arginine 143, glutamine 223, threonine 238, and arginine 302 each bind IMP. The Proton donor role is filled by histidine 41. 298-304 (TVTGRRR) is a binding site for substrate. Residues arginine 304, 330-332 (KLD), and 412-414 (STS) contribute to the GTP site.

The protein belongs to the adenylosuccinate synthetase family. In terms of assembly, homodimer. It depends on Mg(2+) as a cofactor.

The protein resides in the cytoplasm. It catalyses the reaction IMP + L-aspartate + GTP = N(6)-(1,2-dicarboxyethyl)-AMP + GDP + phosphate + 2 H(+). Its pathway is purine metabolism; AMP biosynthesis via de novo pathway; AMP from IMP: step 1/2. In terms of biological role, plays an important role in the de novo pathway of purine nucleotide biosynthesis. Catalyzes the first committed step in the biosynthesis of AMP from IMP. This is Adenylosuccinate synthetase from Zymomonas mobilis subsp. mobilis (strain ATCC 31821 / ZM4 / CP4).